Reading from the N-terminus, the 615-residue chain is 1-deoxy-D-xylulose-5-phosphate synthase (615 aa).

Thiamine diphosphate is bound by residues H72 and 113–115 (GHA). D144 contributes to the Mg(2+) binding site. Thiamine diphosphate contacts are provided by residues 145–146 (GA), N173, Y281, and E360. N173 is a Mg(2+) binding site.

The protein belongs to the transketolase family. DXPS subfamily. Homodimer. It depends on Mg(2+) as a cofactor. The cofactor is thiamine diphosphate.

The enzyme catalyses D-glyceraldehyde 3-phosphate + pyruvate + H(+) = 1-deoxy-D-xylulose 5-phosphate + CO2. It participates in metabolic intermediate biosynthesis; 1-deoxy-D-xylulose 5-phosphate biosynthesis; 1-deoxy-D-xylulose 5-phosphate from D-glyceraldehyde 3-phosphate and pyruvate: step 1/1. Its function is as follows. Catalyzes the acyloin condensation reaction between C atoms 2 and 3 of pyruvate and glyceraldehyde 3-phosphate to yield 1-deoxy-D-xylulose-5-phosphate (DXP). This chain is 1-deoxy-D-xylulose-5-phosphate synthase, found in Thermus thermophilus (strain ATCC 27634 / DSM 579 / HB8).